We begin with the raw amino-acid sequence, 458 residues long: GTPase Obg (458 aa).

The Obg domain maps to 1-157 (MSFLDRVKIY…ITLYLELKVL (157 aa)). Positions 158 to 326 (ADLGLVGFPN…VLNEIVKVIS (169 aa)) constitute an OBG-type G domain. GTP contacts are provided by residues 164 to 171 (GFPNAGKS), 189 to 193 (FTTLN), 210 to 213 (DIPG), 280 to 283 (NKAD), and 307 to 309 (SAA). Residues serine 171 and threonine 191 each coordinate Mg(2+). The OCT domain maps to 341–419 (AVHGVEPLFK…VGQKEFEWSG (79 aa)). Positions 420-458 (TELDSERAEQPDFEGYKRRTTQAERLEKRRQRRLKKEEK) are disordered. Residues 423 to 446 (DSERAEQPDFEGYKRRTTQAERLE) show a composition bias toward basic and acidic residues. Over residues 447–458 (KRRQRRLKKEEK) the composition is skewed to basic residues.

It belongs to the TRAFAC class OBG-HflX-like GTPase superfamily. OBG GTPase family. Monomer. Mg(2+) serves as cofactor.

It is found in the cytoplasm. An essential GTPase which binds GTP, GDP and possibly (p)ppGpp with moderate affinity, with high nucleotide exchange rates and a fairly low GTP hydrolysis rate. Plays a role in control of the cell cycle, stress response, ribosome biogenesis and in those bacteria that undergo differentiation, in morphogenesis control. The protein is GTPase Obg of Elusimicrobium minutum (strain Pei191).